The chain runs to 765 residues: Proton-coupled zinc antiporter SLC30A5 (765 aa).

Met1 bears the N-acetylmethionine mark. Residues 1–32 (MEEKYGGDVLAGPGGGGGLGPVDVPSARLTKY) are Cytoplasmic-facing. Residues 33-53 (IVLLCFTKFLKAVGLFESYDL) traverse the membrane as a helical segment. Over 54–56 (LKA) the chain is Lumenal. Residues 57–77 (VHIVQFIFILKLGTAFFMVLF) form a helical membrane-spanning segment. Residues 78-98 (QKPFSSGKTITKHQWIKIFKH) lie on the Cytoplasmic side of the membrane. A helical membrane pass occupies residues 99–119 (AVAGCIISLLWFFGLTLCGPL). Position 120 (Arg120) is a topological domain, lumenal. A helical transmembrane segment spans residues 121–141 (TLLLFEHSDIVVISLLSVLFT). Residues 142 to 152 (SSGGGPAKTRG) are Cytoplasmic-facing. A helical membrane pass occupies residues 153 to 173 (AAFFIIAVICLLLFDNDDLMA). The Lumenal portion of the chain corresponds to 174–193 (KMAEHPEGHHDSALTHMLYT). A helical membrane pass occupies residues 194–214 (AIAFLGVADHKGGVLLLVLAL). The Cytoplasmic portion of the chain corresponds to 215-238 (CCKVGFHTASRKLSVDVGGAKRLQ). Residues 239–259 (ALSHLVSVLLLCPWVIVLSVT) form a helical membrane-spanning segment. At 260–267 (TESKVESW) the chain is on the lumenal side. The helical transmembrane segment at 268–288 (FSLIMPFATVIFFVMILDFYV) threads the bilayer. The Cytoplasmic portion of the chain corresponds to 289–303 (DSICSVKMEVSKCAR). A helical transmembrane segment spans residues 304 to 324 (YGSFPIFISALLFGNFWTHPI). Topologically, residues 325–342 (TDQLRAMNKAAHQESTEH) are lumenal. A helical membrane pass occupies residues 343–363 (VLSGGVVVSAIFFILSANILS). Residues 364-418 (SPSKRGQKGTLIGYSPEGTPLYNFMGDAFQHSSQSIPRFIKESLKQILEESDSRQ) lie on the Cytoplasmic side of the membrane. Residues 419–439 (IFYFLCLNLLFTFVELFYGVL) traverse the membrane as a helical segment. The interval 420-640 (FYFLCLNLLF…ILIFLSVVPL (221 aa)) is mediates homodimerization with SLC30A6. Residues 440–448 (TNSLGLISD) are Lumenal-facing. A helical membrane pass occupies residues 449 to 469 (GFHMLFDCSALVMGLFAALMS). Zn(2+) is bound by residues His451 and Asp455. The Cytoplasmic segment spans residues 470 to 483 (RWKATRIFSYGYGR). Residues 484-504 (IEILSGFINGLFLIVIAFFVF) traverse the membrane as a helical segment. Topologically, residues 505 to 520 (MESVARLIDPPELDTH) are lumenal. The chain crosses the membrane as a helical span at residues 521-541 (MLTPVSVGGLIVNLIGICAFS). The segment at 542-578 (HAHSHAHGASQGSCHSSDHSHSHHMHGHSDHGHGHSH) is his-rich loop; required for zinc transport. Topologically, residues 542–592 (HAHSHAHGASQGSCHSSDHSHSHHMHGHSDHGHGHSHGSAGGGMNANMRGV) are cytoplasmic. The disordered stretch occupies residues 551–581 (SQGSCHSSDHSHSHHMHGHSDHGHGHSHGSA). Residues 593–613 (FLHVLADTLGSIGVIVSTVLI) traverse the membrane as a helical segment. Positions 595 and 599 each coordinate Zn(2+). Residues 614-617 (EQFG) lie on the Lumenal side of the membrane. The helical transmembrane segment at 618-638 (WFIADPLCSLFIAILIFLSVV) threads the bilayer. The Cytoplasmic segment spans residues 639–765 (PLIKDACQVL…KYCKDGTYIM (127 aa)).

The protein belongs to the cation diffusion facilitator (CDF) transporter (TC 2.A.4) family. SLC30A subfamily. In terms of assembly, heterodimer with SLC30A6/ZNT6; form a functional zinc ion transmembrane transporter. In terms of processing, could homodimerize through the formation of dityrosine bonds upon oxidative stress. In terms of tissue distribution, ubiquitously expressed. Highly expressed in pancreas, liver and kidney. Expressed abundantly in insulin-containing beta cells, undetectable in other endocrine cell types including glucagon-secreting alpha cells and most acinar cells (at protein level).

It localises to the golgi apparatus. The protein resides in the golgi stack membrane. It is found in the cytoplasmic vesicle. Its subcellular location is the COPII-coated vesicle membrane. The protein localises to the secretory vesicle membrane. It localises to the trans-Golgi network membrane. The protein resides in the endoplasmic reticulum membrane. It is found in the cell membrane. Its subcellular location is the apical cell membrane. It catalyses the reaction Zn(2+)(in) + 2 H(+)(out) = Zn(2+)(out) + 2 H(+)(in). Together with SLC30A6 forms a functional proton-coupled zinc ion antiporter mediating zinc entry into the lumen of organelles along the secretory pathway. By contributing to zinc ion homeostasis within the early secretory pathway, regulates the activation and folding of enzymes like alkaline phosphatases and enzymes involved in phosphatidylinositol glycan anchor biosynthesis. Through the transport of zinc into secretory granules of pancreatic beta-cells, plays an important role in the storage and secretion of insulin. Its function is as follows. Zinc ion:proton antiporter mediating influx and efflux of zinc at the plasma membrane. The sequence is that of Proton-coupled zinc antiporter SLC30A5 from Homo sapiens (Human).